A 512-amino-acid chain; its full sequence is Sodium/proline symporter (512 aa).

A run of 13 helical transmembrane segments spans residues 16 to 36, 54 to 74, 85 to 105, 139 to 159, 174 to 194, 200 to 220, 240 to 260, 286 to 306, 327 to 347, 381 to 401, 410 to 430, 438 to 458, and 467 to 487; these read WQTY…GFYG, IGPY…WMIM, LSAM…YFVV, IISG…GFVS, FGLI…GYLA, FFQG…AMMN, LFKG…LGYF, ISWM…GIAF, VLFH…AIMS, FVMI…AIAW, LVGN…LFAL, AGAV…IAWI, and IFGL…TYVV.

Belongs to the sodium:solute symporter (SSF) (TC 2.A.21) family.

The protein localises to the cell membrane. The enzyme catalyses L-proline(in) + Na(+)(in) = L-proline(out) + Na(+)(out). In terms of biological role, catalyzes the sodium-dependent uptake of extracellular L-proline. Since most S.aureus strains are L-proline auxotrophs, this transporter may aid the bacterial persistence during an infection of tissues with low proline concentrations. The protein is Sodium/proline symporter (putP) of Staphylococcus aureus (strain Mu3 / ATCC 700698).